The primary structure comprises 160 residues: Putative lipoprotein YfiB (160 aa).

An N-terminal signal peptide occupies residues 1–18 (MIKHLVAPLVFTSLILTG). Residue cysteine 19 is the site of N-palmitoyl cysteine attachment. Cysteine 19 carries the S-diacylglycerol cysteine lipid modification. The 118-residue stretch at 43–160 (AGDWSLGLSD…RRVAVVITTP (118 aa)) folds into the OmpA-like domain.

It belongs to the outer membrane OOP (TC 1.B.6) superfamily.

The protein resides in the cell membrane. The chain is Putative lipoprotein YfiB (yfiB) from Escherichia coli (strain K12).